The chain runs to 418 residues: Deubiquitinase and deneddylase Dub1 (418 aa).

The span at 1–10 shows a compositional bias: polar residues; that stretch reads MLSPTNSISK. The segment at 1–23 is disordered; that stretch reads MLSPTNSISKTAPVPPQDSSKPV. A helical transmembrane segment spans residues 40-60; it reads TALAVLLVVVTLGLILLFYSF. The interval 72-144 is disordered; it reads TRPSTKEQPT…PLPPKAPKPV (73 aa). Positions 86–141 are enriched in pro residues; sequence VPLPSPPLAVPRPSTPPPPVISRPSTPPAPTPAISPPSTPSAPKPSTPPPLPPKAP. Residues histidine 288, aspartate 305, and cysteine 358 contribute to the active site.

This sequence belongs to the peptidase C48 family.

It localises to the secreted. The protein resides in the host cell. It is found in the membrane. Its function is as follows. Effector proteins function to alter host cell physiology and promote bacterial survival in host tissues. This protease possesses deubiquitinating and deneddylating activities. The protein is Deubiquitinase and deneddylase Dub1 (cdu1) of Chlamydia trachomatis serovar B (strain TZ1A828/OT).